We begin with the raw amino-acid sequence, 83 residues long: Hainantoxin-III 5 (83 aa).

Positions 1–21 are cleaved as a signal peptide; sequence MKASRFLALAGLVLLFVVGYA. A propeptide spanning residues 22-48 is cleaved from the precursor; sequence SESEEKEFPRELLSKIFAVDDFKGEER. 3 disulfide bridges follow: cysteine 50–cysteine 65, cysteine 57–cysteine 70, and cysteine 64–cysteine 77. Leucine amide is present on leucine 81.

It belongs to the neurotoxin 10 (Hwtx-1) family. 15 (Hntx-3) subfamily. Monomer. Expressed by the venom gland.

The protein localises to the secreted. Its function is as follows. Selective antagonist of neuronal tetrodotoxin (TTX)-sensitive voltage-gated sodium channels (IC(50)=1270 nM on Nav1.1/SCN1A, 270 nM on Nav1.2/SCN2A, 491 nM on Nav1.3/SCN3A and 232 nM on Nav1.7/SCN9A). This toxin suppress Nav1.7 current amplitude without significantly altering the activation, inactivation, and repriming kinetics. Short extreme depolarizations partially activate the toxin-bound channel, indicating voltage-dependent inhibition of this toxin. This toxin increases the deactivation of the Nav1.7 current after extreme depolarizations. The toxin-Nav1.7 complex is gradually dissociated upon prolonged strong depolarizations in a voltage-dependent manner, and the unbound toxin rebinds to Nav1.7 after a long repolarization. Moreover, analysis of chimeric channels showed that the DIIS3-S4 linker is critical for toxin binding to Nav1.7. These data are consistent with this toxin interacting with Nav1.7 site 4 and trapping the domain II voltage sensor in the closed state. The polypeptide is Hainantoxin-III 5 (Cyriopagopus hainanus (Chinese bird spider)).